A 346-amino-acid polypeptide reads, in one-letter code: Membrane progestin receptor alpha (346 aa).

The Cytoplasmic portion of the chain corresponds to 1–72; the sequence is MAMAQKLSHL…RTLFQQHNEA (72 aa). The helical transmembrane segment at 73-93 threads the bilayer; sequence VNVWTHLLAALVLLLRLALFV. Over 94 to 103 the chain is Extracellular; that stretch reads ETVDFWGDPH. Residues 104–124 traverse the membrane as a helical segment; the sequence is ALPLFIIVLASFTYLSFSALA. Residues 125 to 137 lie on the Cytoplasmic side of the membrane; sequence HLLQAKSEFWHYS. Residues 138-158 form a helical membrane-spanning segment; sequence FFFLDYVGVAVYQFGSALAHF. The Extracellular portion of the chain corresponds to 159-169; that stretch reads YYAIEPAWHAQ. Residues 170-190 traverse the membrane as a helical segment; that stretch reads VQAVFLPMAAFLAWLSCIGSC. The Cytoplasmic portion of the chain corresponds to 191–237; sequence YNKYIQKPGLLGRTCQEVPSVLAYALDISPVVHRIFVSSDPTTDDPA. Residues 238–258 form a helical membrane-spanning segment; sequence LLYHKCQVVFFLLAAAFFSTF. Residues 259 to 276 are Extracellular-facing; it reads MPERWFPGSCHVFGQGHQ. Residues 277–297 traverse the membrane as a helical segment; sequence LFHIFLVLCTLAQLEAVALDY. Residues 298–316 are Cytoplasmic-facing; the sequence is EARRPIYEPLHTHWPHNFS. The helical transmembrane segment at 317-337 threads the bilayer; that stretch reads GLFLLTVGSSILTAFLLSQLV. Residues 338 to 346 are Extracellular-facing; that stretch reads QRKLDQKTK.

The protein belongs to the ADIPOR family. In terms of tissue distribution, expressed in a wide range of tissues including ovary, testis, placenta, uterus and bladder.

The protein localises to the cell membrane. Its function is as follows. Plasma membrane progesterone (P4) receptor coupled to G proteins. Seems to act through a G(i) mediated pathway. May be involved in oocyte maturation. Involved in neurosteroid inhibition of apoptosis. Also binds dehydroepiandrosterone (DHEA), pregnanolone, pregnenolone and allopregnanolone. The sequence is that of Membrane progestin receptor alpha from Homo sapiens (Human).